The primary structure comprises 341 residues: MATNIAINGMGRIGRMVLRIALNNKNLNVKAINASYPPETIAHLLNYDTTHGVYDKKVEPIESGIKVNGHEIKLLSDRNPENLPWNEMDIDVVIEATGKFNHGDKAVAHINAGAKKVLLTGPSKGGDVQMIVKGVNDNQLDIDTYDIFSNASCTTNCIGPVAKVLNDKFGIINGLMTTVHAITNDQKNIDNPHKDLRRARSCNESIIPTSTGAAKALKEVLPEVEGKLHGMALRVPTKNVSLVDLVVDLEQNVTVTQVNDAFKNADLSGVLDVEEAPLVSVDFNTNPHSAIIDSQSTMVMGQNKVKVIAWYDNEWGYSNRVVEVADKIGQLIDDKAMVKAI.

NAD(+) contacts are provided by residues R12–I13, R78, and T120. D-glyceraldehyde 3-phosphate-binding positions include S152–T154 and T183. The active-site Nucleophile is the C153. N184 lines the NAD(+) pocket. D-glyceraldehyde 3-phosphate-binding positions include R198, T211 to G212, and R234. Residue N313 participates in NAD(+) binding.

The protein belongs to the glyceraldehyde-3-phosphate dehydrogenase family. As to quaternary structure, homotetramer.

It localises to the cytoplasm. It carries out the reaction D-glyceraldehyde 3-phosphate + phosphate + NAD(+) = (2R)-3-phospho-glyceroyl phosphate + NADH + H(+). It participates in carbohydrate degradation; glycolysis; pyruvate from D-glyceraldehyde 3-phosphate: step 1/5. Its function is as follows. Catalyzes the oxidative phosphorylation of glyceraldehyde 3-phosphate (G3P) to 1,3-bisphosphoglycerate (BPG) using the cofactor NAD. The first reaction step involves the formation of a hemiacetal intermediate between G3P and a cysteine residue, and this hemiacetal intermediate is then oxidized to a thioester, with concomitant reduction of NAD to NADH. The reduced NADH is then exchanged with the second NAD, and the thioester is attacked by a nucleophilic inorganic phosphate to produce BPG. The protein is Glyceraldehyde-3-phosphate dehydrogenase 2 (gapA2) of Staphylococcus epidermidis (strain ATCC 35984 / DSM 28319 / BCRC 17069 / CCUG 31568 / BM 3577 / RP62A).